The primary structure comprises 249 residues: MIT domain-containing protein 1 (249 aa).

The MIT domain maps to 8–86 (QDPQSTAAAT…KYLDQEKEDG (79 aa)). The important for association with membranes stretch occupies residues 168–231 (RGLQEIEESL…SLGYCDFDLR (64 aa)).

In terms of assembly, homodimer. Interacts (via MIT domain) with CHMP1A, CHMP1B, CHMP2A and IST1.

The protein localises to the late endosome membrane. It localises to the midbody. The protein resides in the membrane. In terms of biological role, required for efficient abscission at the end of cytokinesis, together with components of the ESCRT-III complex. This chain is MIT domain-containing protein 1 (MITD1), found in Homo sapiens (Human).